A 159-amino-acid polypeptide reads, in one-letter code: Transcription repressor OFP6 (159 aa).

Residues 39–60 form a disordered region; that stretch reads PKRPSSTYRHCHSSISSATPSS. A compositionally biased stretch (low complexity) spans 51 to 60; that stretch reads SSISSATPSS. The OVATE domain occupies 70 to 129; the sequence is VEKDSDDPYLDFRQSMLQMILENQIYSKDELRELLQCFLSLNSHYHHGIIVRAFSEIWED.

As to quaternary structure, interacts with KNAT1 and KNAT7. In terms of tissue distribution, expressed in roots, shoots, rosette and cauline leaves, stems, flower buds and siliques.

The protein localises to the nucleus. Functionally, transcriptional repressor that regulates multiple aspects of plant growth and development through the regulation of BEL1-LIKE (BLH) and KNOX TALE (KNAT) homeodomain transcription factors. This chain is Transcription repressor OFP6 (OFP6), found in Arabidopsis thaliana (Mouse-ear cress).